A 110-amino-acid polypeptide reads, in one-letter code: Phosphoribosyl-AMP cyclohydrolase (110 aa).

Asp80 is a binding site for Mg(2+). Residue Cys81 coordinates Zn(2+). Asp82 and Asp84 together coordinate Mg(2+). Residues Cys97 and Cys104 each coordinate Zn(2+).

Belongs to the PRA-CH family. In terms of assembly, homodimer. Mg(2+) serves as cofactor. It depends on Zn(2+) as a cofactor.

It localises to the cytoplasm. The enzyme catalyses 1-(5-phospho-beta-D-ribosyl)-5'-AMP + H2O = 1-(5-phospho-beta-D-ribosyl)-5-[(5-phospho-beta-D-ribosylamino)methylideneamino]imidazole-4-carboxamide. It participates in amino-acid biosynthesis; L-histidine biosynthesis; L-histidine from 5-phospho-alpha-D-ribose 1-diphosphate: step 3/9. In terms of biological role, catalyzes the hydrolysis of the adenine ring of phosphoribosyl-AMP. The protein is Phosphoribosyl-AMP cyclohydrolase of Clostridium botulinum (strain 657 / Type Ba4).